The following is a 349-amino-acid chain: Dihydroorotate dehydrogenase (quinone) (349 aa).

FMN-binding positions include 67-71 and Thr91; that span reads AGLDK. Lys71 serves as a coordination point for substrate. 116–120 contributes to the substrate binding site; it reads NRLGF. FMN is bound by residues Asn147 and Asn180. Asn180 is a binding site for substrate. Residue Ser183 is the Nucleophile of the active site. Substrate is bound at residue Asn185. 2 residues coordinate FMN: Lys225 and Thr253. Position 254–255 (254–255) interacts with substrate; the sequence is NT. FMN-binding positions include Gly276, Gly305, and 326–327; that span reads YT.

The protein belongs to the dihydroorotate dehydrogenase family. Type 2 subfamily. As to quaternary structure, monomer. FMN serves as cofactor.

The protein resides in the cell membrane. It catalyses the reaction (S)-dihydroorotate + a quinone = orotate + a quinol. It participates in pyrimidine metabolism; UMP biosynthesis via de novo pathway; orotate from (S)-dihydroorotate (quinone route): step 1/1. Catalyzes the conversion of dihydroorotate to orotate with quinone as electron acceptor. This Bordetella pertussis (strain Tohama I / ATCC BAA-589 / NCTC 13251) protein is Dihydroorotate dehydrogenase (quinone).